The chain runs to 484 residues: Pentatricopeptide repeat-containing protein At1g09190 (484 aa).

PPR repeat units follow at residues 66–100, 101–135, 136–166, 167–197, 198–232, 233–267, 269–299, 300–334, 336–366, and 372–406; these read NVLV…GIWA, DEYT…GFHR, LGKI…MSER, NVVV…MSER, SIVS…GFDP, DEAT…GLFK, FITV…MQRR, NVVS…GKVA, NEAT…MMER, and RTEH…ANAA. Residues 407 to 482 form a type E motif region; sequence MWGSLLSACR…STGQSTICDV (76 aa).

Belongs to the PPR family. PCMP-E subfamily.

This is Pentatricopeptide repeat-containing protein At1g09190 (PCMP-E70) from Arabidopsis thaliana (Mouse-ear cress).